Reading from the N-terminus, the 274-residue chain is 2-dehydro-3-deoxyphosphooctonate aldolase (274 aa).

Belongs to the KdsA family.

It localises to the cytoplasm. The enzyme catalyses D-arabinose 5-phosphate + phosphoenolpyruvate + H2O = 3-deoxy-alpha-D-manno-2-octulosonate-8-phosphate + phosphate. Its pathway is carbohydrate biosynthesis; 3-deoxy-D-manno-octulosonate biosynthesis; 3-deoxy-D-manno-octulosonate from D-ribulose 5-phosphate: step 2/3. It participates in bacterial outer membrane biogenesis; lipopolysaccharide biosynthesis. The polypeptide is 2-dehydro-3-deoxyphosphooctonate aldolase (Rickettsia bellii (strain OSU 85-389)).